Here is a 472-residue protein sequence, read N- to C-terminus: ATP synthase subunit beta (472 aa).

160-167 is a binding site for ATP; the sequence is GGAGVGKT.

Belongs to the ATPase alpha/beta chains family. F-type ATPases have 2 components, CF(1) - the catalytic core - and CF(0) - the membrane proton channel. CF(1) has five subunits: alpha(3), beta(3), gamma(1), delta(1), epsilon(1). CF(0) has three main subunits: a(1), b(2) and c(9-12). The alpha and beta chains form an alternating ring which encloses part of the gamma chain. CF(1) is attached to CF(0) by a central stalk formed by the gamma and epsilon chains, while a peripheral stalk is formed by the delta and b chains.

It localises to the cell membrane. It catalyses the reaction ATP + H2O + 4 H(+)(in) = ADP + phosphate + 5 H(+)(out). Produces ATP from ADP in the presence of a proton gradient across the membrane. The catalytic sites are hosted primarily by the beta subunits. The polypeptide is ATP synthase subunit beta (Lachnoclostridium phytofermentans (strain ATCC 700394 / DSM 18823 / ISDg) (Clostridium phytofermentans)).